Consider the following 523-residue polypeptide: Ribonuclease Y (523 aa).

Residues Trp-18–Phe-38 form a helical membrane-spanning segment. The 64-residue stretch at Thr-213–Leu-276 folds into the KH domain. The HD domain maps to Val-339 to Thr-432.

It belongs to the RNase Y family.

Its subcellular location is the cell membrane. Its function is as follows. Endoribonuclease that initiates mRNA decay. The sequence is that of Ribonuclease Y from Opitutus terrae (strain DSM 11246 / JCM 15787 / PB90-1).